The following is a 581-amino-acid chain: Serine/threonine-protein kinase PINK1, mitochondrial (581 aa).

The N-terminal 77 residues, 1 to 77 (MAVRQALGRG…RFFRQSVAGL (77 aa)), are a transit peptide targeting the mitochondrion. Residues 78 to 93 (AARLQRQFVVRAWGCA) lie on the Mitochondrial intermembrane side of the membrane. The helical transmembrane segment at 94–110 (GPCGRAVFLAFGLGLGL) threads the bilayer. Residues 111 to 117 (IEEKQAE) form a required for outer membrane localization region. Topologically, residues 111-581 (IEEKQAESRR…LLLCSWRAAL (471 aa)) are cytoplasmic. In terms of domain architecture, Protein kinase spans 156–511 (YLIGQSIGKG…VAANVLHLSL (356 aa)). ATP contacts are provided by residues 162-170 (IGKGCSAAV) and K186. The tract at residues 189–208 (GLLPGRGPGTSAPGEGQERA) is disordered. Residue S228 is modified to Phosphoserine; by autocatalysis. D362 (proton acceptor) is an active-site residue. At S402 the chain carries Phosphoserine; by autocatalysis.

Belongs to the protein kinase superfamily. Ser/Thr protein kinase family. As to quaternary structure, upon mitochondrial depolarization, it forms a supercomplex with TOM and TIM23 complexes. PINK1-TOM-TIM23 supercomplex formation requires PINK1 interaction with TOMM20 and TOMM70 and is critical for PINK1 stabilization at the outer mitochondrial membrane, kinase activation and downstream mitophagy. Upon mitochondrial depolarization, interacts with TIMM23; the interaction is required for PINK1 accumulation at the outer mitochondrial membrane, kinase activation by autophosphorylation and PRKN recruitement to mitochondria. Interacts with PRKN. Interacts with FBXO7. Forms a complex with PRKN and PARK7. Interacts with NENF. The cofactor is Mg(2+). Post-translationally, proteolytically cleaved. In healthy cells, the precursor is continuously imported into the inner mitochondrial membrane (IMM), where it is proteolytically cleaved by mitochondrial-processing peptidase (MPP) and then undergoes further proteolytic cleavage by PARL or AFG3L2 to give rise to the 52 kDa short form. The 52 kDa short form is then released into the cytosol where it rapidly undergoes proteasome-dependent degradation. In unhealthy cells, when cellular stress conditions lead to the loss of mitochondrial membrane potential, mitochondrial import is impaired leading to the precursor accumulating on the outer mitochondrial membrane (OMM). If accumulation at the OMM fails and it is imported into the depolarized mitochondria, it undergoes cleavage by the IMM protease OMA1, promoting its subsequent degradation by the proteasome. Autophosphorylated. Loss of mitochondrial membrane potential results in the precursor accumulating on the outer mitochondrial membrane (OMM) where it is activated by autophosphorylation. Autophosphorylation at Ser-228 and Ser-402 is sufficient and essential for selective recruitment of PRKN to depolarized mitochondria, via PINK1-dependent phosphorylation of ubiquitin and maybe PRKN. As to expression, highly expressed in heart, skeletal muscle and testis, and at lower levels in brain, placenta, liver, kidney, pancreas, prostate, ovary and small intestine. Present in the embryonic testis from an early stage of development.

It is found in the mitochondrion outer membrane. The protein resides in the mitochondrion inner membrane. Its subcellular location is the cytoplasm. It localises to the cytosol. The catalysed reaction is L-seryl-[protein] + ATP = O-phospho-L-seryl-[protein] + ADP + H(+). It catalyses the reaction L-threonyl-[protein] + ATP = O-phospho-L-threonyl-[protein] + ADP + H(+). Serine/threonine-protein kinase which acts as a sensor of mitochondrial damage and protects against mitochondrial dysfunction during cellular stress. It phosphorylates mitochondrial proteins to coordinate mitochondrial quality control mechanisms that remove and replace dysfunctional mitochondrial components. Depending on the severity of mitochondrial damage, activity ranges from preventing apoptosis and stimulating mitochondrial biogenesis to eliminating severely damaged mitochondria via PINK1-PRKN-dependent mitophagy. When cellular stress results in irreversible mitochondrial damage, PINK1 accumulates at the outer mitochondrial membrane (OMM) where it phosphorylates pre-existing polyubiquitin chains at 'Ser-65', recruits PRKN from the cytosol to the OMM and activates PRKN by phosphorylation at 'Ser-65'; activated PRKN then ubiquinates VDAC1 and other OMM proteins to initiate mitophagy. The PINK1-PRKN pathway also promotes fission of damaged mitochondria through phosphorylation and PRKN-dependent degradation of mitochondrial proteins involved in fission such as MFN2. This prevents the refusion of unhealthy mitochondria with the mitochondrial network or initiates mitochondrial fragmentation facilitating their later engulfment by autophagosomes. Also promotes mitochondrial fission independently of PRKN and ATG7-mediated mitophagy, via the phosphorylation and activation of DNM1L. Regulates motility of damaged mitochondria by promoting the ubiquitination and subsequent degradation of MIRO1 and MIRO2; in motor neurons, this likely inhibits mitochondrial intracellular anterograde transport along the axons which probably increases the chance of the mitochondria undergoing mitophagy in the soma. Required for ubiquinone reduction by mitochondrial complex I by mediating phosphorylation of complex I subunit NDUFA10. Phosphorylates LETM1, positively regulating its mitochondrial calcium transport activity. This Homo sapiens (Human) protein is Serine/threonine-protein kinase PINK1, mitochondrial (PINK1).